A 129-amino-acid polypeptide reads, in one-letter code: Succinate dehydrogenase cytochrome b556 subunit (129 aa).

Residues 1–26 (MIRNVKKQRPVNLDLQTIRFPITAIA) lie on the Cytoplasmic side of the membrane. The chain crosses the membrane as a helical span at residues 27–52 (SILHRVSGVITFIAVGILLWLLGTSL). Over 53-68 (SSPEGFQQAADIMDGF) the chain is Periplasmic. The helical transmembrane segment at 69 to 89 (IVKFIMWGILTALAYHVIVGI) threads the bilayer. Residue H84 participates in heme binding. Topologically, residues 90–108 (RHMLMDFGYLEETFEAGQR) are cytoplasmic. Residues 109–129 (SAKISFVITVVLSLLAGVLVW) form a helical membrane-spanning segment.

The protein belongs to the cytochrome b560 family. As to quaternary structure, part of an enzyme complex containing four subunits: a flavoprotein, an iron-sulfur protein, plus two membrane-anchoring proteins, SdhC and SdhD. The complex can form homotrimers. Heme serves as cofactor.

The protein resides in the cell inner membrane. The protein operates within carbohydrate metabolism; tricarboxylic acid cycle. Membrane-anchoring subunit of succinate dehydrogenase (SDH). In Salmonella typhi, this protein is Succinate dehydrogenase cytochrome b556 subunit (sdhC).